The primary structure comprises 370 residues: Cyanuric acid amidohydrolase (370 aa).

An RU A region spans residues 1-103 (MQAQVFRVPM…TIFTVQKTDN (103 aa)). Residues R51 and 82-83 (SG) contribute to the substrate site. Residues 113 to 250 (RLAVQQIFTR…NEIIVMGNSR (138 aa)) are RU B. The active site involves K163. Substrate is bound by residues R195 and 233 to 234 (SA). The Nucleophile role is filled by S233. The tract at residues 256–370 (LVIGHAEMKD…GPVAVIARTA (115 aa)) is RU C. E303 is a binding site for Mg(2+). Residues R330 and 349–350 (SG) contribute to the substrate site. Mg(2+)-binding residues include S352, Q355, G356, P357, and G360.

The protein belongs to the cyclic amide hydrolase (CyAH) family. In terms of assembly, homotetramer.

The catalysed reaction is cyanurate + H2O = 1-carboxybiuret + H(+). The protein operates within xenobiotic degradation; atrazine degradation; biuret from cyanurate: step 1/1. With respect to regulation, inhibited by barbituric acid. Its function is as follows. Responsible for the hydrolysis of cyanuric acid, an intermediate formed during catabolism of s-triazine based compounds in herbicides such as atrazine and polymers such as melamine. Catalyzes the hydrolytic opening of the s-triazine ring of cyanuric acid (2,4,6-trihydroxy-s-triazine) to yield carbon dioxide and carboxybiuret, which spontaneously decarboxylates to biuret. This is Cyanuric acid amidohydrolase (trzD) from Pseudomonas sp.